We begin with the raw amino-acid sequence, 261 residues long: Phosphatidylglycerol--prolipoprotein diacylglyceryl transferase (261 aa).

The next 4 helical transmembrane spans lie at 12-32 (ISIRWYAICIVTGLVLAVYLA), 41-61 (IIPDDILDFILVAFPVAIVGA), 87-107 (GIAGIAIYGGLIAGAIVLYFF), and 112-132 (LIHPVDFLDIAAPSVMIAQSI). R134 provides a ligand contact to a 1,2-diacyl-sn-glycero-3-phospho-(1'-sn-glycerol). The next 3 membrane-spanning stretches (helical) occupy residues 170-190 (QPTFLYESVWNLIGFILIIVL), 200-220 (GEIAAFYLIWYGFGRMIIEGM), and 229-249 (GLRVSQWLSLILIFVGIGIII).

Belongs to the Lgt family.

It is found in the cell membrane. It carries out the reaction L-cysteinyl-[prolipoprotein] + a 1,2-diacyl-sn-glycero-3-phospho-(1'-sn-glycerol) = an S-1,2-diacyl-sn-glyceryl-L-cysteinyl-[prolipoprotein] + sn-glycerol 1-phosphate + H(+). Its pathway is protein modification; lipoprotein biosynthesis (diacylglyceryl transfer). Catalyzes the transfer of the diacylglyceryl group from phosphatidylglycerol to the sulfhydryl group of the N-terminal cysteine of a prolipoprotein, the first step in the formation of mature lipoproteins. In Streptococcus sanguinis (strain SK36), this protein is Phosphatidylglycerol--prolipoprotein diacylglyceryl transferase.